We begin with the raw amino-acid sequence, 126 residues long: Protein ApaG (126 aa).

The ApaG domain occupies 2-126 (DVIQPCIKIQ…FRLAIPNVLN (125 aa)).

The chain is Protein ApaG from Vibrio campbellii (strain ATCC BAA-1116).